The primary structure comprises 413 residues: Histidine--tRNA ligase (413 aa).

It belongs to the class-II aminoacyl-tRNA synthetase family.

It localises to the cytoplasm. It carries out the reaction tRNA(His) + L-histidine + ATP = L-histidyl-tRNA(His) + AMP + diphosphate + H(+). This is Histidine--tRNA ligase from Methanosarcina acetivorans (strain ATCC 35395 / DSM 2834 / JCM 12185 / C2A).